Here is a 182-residue protein sequence, read N- to C-terminus: Photosystem I assembly protein Ycf4 (182 aa).

Transmembrane regions (helical) follow at residues 22-42 (WSSVIFLGASGFLLTGLSSYL) and 63-83 (VMCFYGILGLIFSVYLGLTIF).

The protein belongs to the Ycf4 family.

It is found in the plastid. The protein resides in the chloroplast thylakoid membrane. Seems to be required for the assembly of the photosystem I complex. The protein is Photosystem I assembly protein Ycf4 of Oltmannsiellopsis viridis (Marine flagellate).